An 80-amino-acid chain; its full sequence is uncharacterized protein (80 aa).

This is an uncharacterized protein from Homo sapiens (Human).